We begin with the raw amino-acid sequence, 825 residues long: MDDDGLLINFEVGEGPIKPQIKFTGGRWRERNRLQRSVKRGLTGSQSNDAVADDVGPAPAKRQRLSEGAAPEIQRRFRPQAQGPRSQHVSSRLFTSNPTPVTNFDEPETAPAEEPAEPALPSNAPLSDEAATFAALGLSRRIAQHLSAKLELKAPTAIQHRAVPHLVTTDEDAFLQAQTGSGKTLAYLLPIVNRILALNQNEDGTISKDASKKIHRNSGLLAIVLAPTRELCKQIATVLEKLLRCAPWIVSTTVIGGESKHSEKARIRKGINILIATPGRLKDHLDNTKVLDVSLARWLILDEGDRMMEMGFMDDLKEIVSKMREAPLKKINPDGIQLEPALPTRRVTVLCSATLDHAQVRRLGEYSLEADKTELIKVDGTEAAKEGDEASEAVFAAPSQLKQSYLVVPAKLRLVTLIALLKSSFARRGSVMKAIIFISCADSVDFHFDLLRSPIKEPKEAAAPPTPKKAPKDAGETPDTPPKETKPTKPVTNHTESTVGKACYITSAANTTITLHKLHGSLAQPVRTATLDSFSKSKDPSILITTDISSRGLDVPAVDLVIEYDPAFAVADHVHRIGRTARAGRPGKAVLFLQPGSEEGYVGLLQKNASTALTPQLYDSVLQAGFSSNIDLPPVTATNEDGQDTEQQKQLDSRKQTWTSRAEALQLHLEQRLLASDASSQASNNSGKGFNSKKGASTKLGKPAPKSSDGATGTLLASGRQAFRSHIRAYATHVRDERVYFDMTQLHLGHMAKAFGLREAPGGIGAGVQRRTVKPSAANGGGKKSTKGDDGDGLDKQDDDEAERTRRMKKMMRMVGAGASEFNIG.

The disordered stretch occupies residues 21 to 125 (IKFTGGRWRE…AEPALPSNAP (105 aa)). Positions 49–60 (DAVADDVGPAPA) are enriched in low complexity. Polar residues predominate over residues 83-102 (GPRSQHVSSRLFTSNPTPVT). Low complexity predominate over residues 109 to 125 (TAPAEEPAEPALPSNAP). The Q motif motif lies at 131-160 (ATFAALGLSRRIAQHLSAKLELKAPTAIQH). The Helicase ATP-binding domain occupies 164–373 (PHLVTTDEDA…GEYSLEADKT (210 aa)). Residue 177–184 (AQTGSGKT) coordinates ATP. The DEAD box signature appears at 302–305 (DEGD). In terms of domain architecture, Helicase C-terminal spans 400-625 (QLKQSYLVVP…QLYDSVLQAG (226 aa)). Disordered stretches follow at residues 457-495 (EPKE…TNHT), 632-657 (LPPV…RKQT), 676-713 (SDAS…GATG), and 764-825 (IGAG…FNIG). Basic and acidic residues-rich tracts occupy residues 470 to 487 (APKD…ETKP) and 646 to 655 (EQQKQLDSRK). The segment covering 676 to 686 (SDASSQASNNS) has biased composition (low complexity). Basic and acidic residues predominate over residues 786–796 (TKGDDGDGLDK).

This sequence belongs to the DEAD box helicase family. DDX31/DBP7 subfamily.

Its subcellular location is the nucleus. It localises to the nucleolus. The enzyme catalyses ATP + H2O = ADP + phosphate + H(+). Functionally, ATP-binding RNA helicase involved in the biogenesis of 60S ribosomal subunits and is required for the normal formation of 25S and 5.8S rRNAs. This Pyricularia oryzae (strain 70-15 / ATCC MYA-4617 / FGSC 8958) (Rice blast fungus) protein is ATP-dependent RNA helicase DBP7 (DBP7).